The chain runs to 189 residues: UPF0340 protein EF_1967 (189 aa).

This sequence belongs to the UPF0340 family.

The polypeptide is UPF0340 protein EF_1967 (Enterococcus faecalis (strain ATCC 700802 / V583)).